The primary structure comprises 450 residues: uncharacterized protein (450 aa).

The protein belongs to the heat shock protein 70 family.

This is an uncharacterized protein from Escherichia coli (strain K12).